Reading from the N-terminus, the 89-residue chain is Small ribosomal subunit protein bS20 (89 aa).

The disordered stretch occupies residues 1-21; that stretch reads MANSAQAKKRARQNVKARKHN. A compositionally biased stretch (basic residues) spans 7–21; it reads AKKRARQNVKARKHN.

The protein belongs to the bacterial ribosomal protein bS20 family.

Its function is as follows. Binds directly to 16S ribosomal RNA. The protein is Small ribosomal subunit protein bS20 of Acinetobacter baylyi (strain ATCC 33305 / BD413 / ADP1).